The sequence spans 719 residues: Disintegrin and metalloproteinase domain-containing protein 18 (719 aa).

Positions 1–19 (MPLLFILAELAMLFARLDS) are cleaved as a signal peptide. The propeptide occupies 20-179 (EGICLHITVP…QDKNHSQLLP (160 aa)). N-linked (GlcNAc...) asparagine glycans are attached at residues asparagine 61, asparagine 75, asparagine 121, asparagine 152, asparagine 173, asparagine 244, and asparagine 331. Over 173–683 (NHSQLLPQSL…TKRLSKNEDS (511 aa)) the chain is Extracellular. Positions 180–378 (QSLKLHIIVG…FDTQCLGDLS (199 aa)) constitute a Peptidase M12B domain. Intrachain disulfides connect cysteine 289–cysteine 373, cysteine 332–cysteine 357, and cysteine 334–cysteine 339. N-linked (GlcNAc...) asparagine glycans are attached at residues asparagine 356 and asparagine 405. The Disintegrin domain maps to 387 to 476 (QAVCGNGIME…HCVPDTFALN (90 aa)). Cysteine 447 and cysteine 468 form a disulfide bridge. N-linked (GlcNAc...) asparagine glycans are attached at residues asparagine 607, asparagine 614, and asparagine 621. The EGF-like domain occupies 616-650 (TGNDCNATKKCKGNGICNNFGNCQCFPDYRPPDCN). 3 disulfides stabilise this stretch: cysteine 620/cysteine 632, cysteine 626/cysteine 638, and cysteine 640/cysteine 649. The helical transmembrane segment at 684 to 704 (WVILGFFIFLPFIVTFLVGIM) threads the bilayer. Topologically, residues 705-719 (KRNERKIVPQGEHKI) are cytoplasmic.

Post-translationally, the prodomain and the metalloprotease-like domain are cleaved during the epididymal maturation of the spermatozoa. In terms of tissue distribution, expressed specifically in testis.

It is found in the membrane. In terms of biological role, sperm surface membrane protein that may be involved in spermatogenesis and fertilization. This is a non catalytic metalloprotease-like protein. The chain is Disintegrin and metalloproteinase domain-containing protein 18 (Adam18) from Mus musculus (Mouse).